The chain runs to 408 residues: Putative UPF0496 protein 2 (408 aa).

A run of 2 helical transmembrane segments spans residues 224–244 (RIARGTAAAALVGACAAAIVA) and 252–272 (ALVGIGVAAAAFGATPAGAAR). The segment at 385–408 (MARGLPPPSPATVTTTSEERLTSS) is disordered.

Belongs to the UPF0496 family.

The protein localises to the membrane. The protein is Putative UPF0496 protein 2 of Oryza sativa subsp. indica (Rice).